The following is a 298-amino-acid chain: uncharacterized protein (298 aa).

D119 is an active-site residue.

This sequence belongs to the pseudouridine synthase RluA family.

The catalysed reaction is a uridine in RNA = a pseudouridine in RNA. This is an uncharacterized protein from Helicobacter pylori (strain ATCC 700392 / 26695) (Campylobacter pylori).